The primary structure comprises 458 residues: Homogentisate 1,2-dioxygenase (458 aa).

His308 acts as the Proton acceptor in catalysis. Fe cation-binding residues include His351 and Glu357. Residues Tyr366 and His387 each coordinate homogentisate. His387 provides a ligand contact to Fe cation.

Belongs to the homogentisate dioxygenase family. Hexamer; dimer of trimers. Fe cation is required as a cofactor.

It carries out the reaction homogentisate + O2 = 4-maleylacetoacetate + H(+). Its pathway is amino-acid degradation; L-phenylalanine degradation; acetoacetate and fumarate from L-phenylalanine: step 4/6. Its function is as follows. Involved in the catabolism of homogentisate (2,5-dihydroxyphenylacetate or 2,5-OH-PhAc), a central intermediate in the degradation of phenylalanine and tyrosine. Catalyzes the oxidative ring cleavage of the aromatic ring of homogentisate to yield maleylacetoacetate. This chain is Homogentisate 1,2-dioxygenase, found in Xanthomonas axonopodis pv. citri (strain 306).